A 150-amino-acid chain; its full sequence is Large ribosomal subunit protein bL9 (150 aa).

It belongs to the bacterial ribosomal protein bL9 family.

Binds to the 23S rRNA. In Paracidovorax citrulli (strain AAC00-1) (Acidovorax citrulli), this protein is Large ribosomal subunit protein bL9.